The primary structure comprises 334 residues: MAFNLRNRNFLKLLDFTPKEIAHLLELSAELKKAKYSGYEQPRLTGKNIALIFEKSSTRTRCAFEVAAFDQGAKVTYLGPSGSQIGHKESMKDTARVLGRMYDGIEYRGFGQTIVEELGQYAGVPVWNGLTDEFHPTQILADFLTMQEYANGKQLSQITFAYLGDARNNMGNSLMVGAAKMGMEIRLVAPKQFWPEEELVTQCQEIALQTGAKIVLTEEVTEGVKGCDFLYTDVWVSMGEAPEAWDERVALMTPYQINMDVIKATENPNVKFMHCLPAFHNDETTLGKEIAEKYGMNGLEVTEDVFESEYSIVFDEAENRMHTIKAVMVATLGS.

Residues 57-60, glutamine 84, arginine 108, and 135-138 each bind carbamoyl phosphate; these read STRT and HPTQ. Residues asparagine 169, aspartate 233, and 237–238 each bind L-ornithine; that span reads SM. Carbamoyl phosphate is bound by residues 275–276 and arginine 320; that span reads CL.

This sequence belongs to the aspartate/ornithine carbamoyltransferase superfamily. OTCase family.

Its subcellular location is the cytoplasm. It catalyses the reaction carbamoyl phosphate + L-ornithine = L-citrulline + phosphate + H(+). Its pathway is amino-acid biosynthesis; L-arginine biosynthesis; L-arginine from L-ornithine and carbamoyl phosphate: step 1/3. Its function is as follows. Reversibly catalyzes the transfer of the carbamoyl group from carbamoyl phosphate (CP) to the N(epsilon) atom of ornithine (ORN) to produce L-citrulline. This Aliivibrio fischeri (strain ATCC 700601 / ES114) (Vibrio fischeri) protein is Ornithine carbamoyltransferase.